The following is a 159-amino-acid chain: Riboflavin kinase (159 aa).

38-43 (GLGEGR) lines the CDP pocket. Positions 67 and 69 each coordinate Mg(2+). 2 residues coordinate FMN: Thr126 and Glu134. 139 to 142 (HKLR) contributes to the CDP binding site.

The protein belongs to the archaeal riboflavin kinase family. The cofactor is Mg(2+).

It catalyses the reaction riboflavin + CTP = CDP + FMN + H(+). The protein operates within cofactor biosynthesis; FMN biosynthesis; FMN from riboflavin (CTP route): step 1/1. Its function is as follows. Catalyzes the CTP-dependent phosphorylation of riboflavin (vitamin B2) to form flavin mononucleotide (FMN). The protein is Riboflavin kinase of Sulfolobus acidocaldarius (strain ATCC 33909 / DSM 639 / JCM 8929 / NBRC 15157 / NCIMB 11770).